Consider the following 103-residue polypeptide: Large ribosomal subunit protein bL21 (103 aa).

It belongs to the bacterial ribosomal protein bL21 family. In terms of assembly, part of the 50S ribosomal subunit. Contacts protein L20.

This protein binds to 23S rRNA in the presence of protein L20. This is Large ribosomal subunit protein bL21 from Shewanella loihica (strain ATCC BAA-1088 / PV-4).